We begin with the raw amino-acid sequence, 937 residues long: Beta-mannosidase A (937 aa).

A signal peptide spans 1–23; that stretch reads MRALPTTATTLLGVLFFPSASRS. N42, N82, N250, N285, N319, N329, and N350 each carry an N-linked (GlcNAc...) asparagine glycan. E482 acts as the Proton donor in catalysis. Residues N553, N612, N743, and N796 are each glycosylated (N-linked (GlcNAc...) asparagine).

Belongs to the glycosyl hydrolase 2 family. Beta-mannosidase A subfamily. Homodimer. In terms of processing, N-glycosylated.

The protein resides in the secreted. It carries out the reaction Hydrolysis of terminal, non-reducing beta-D-mannose residues in beta-D-mannosides.. It functions in the pathway glycan metabolism; N-glycan degradation. Functionally, exoglycosidase that cleaves the single beta-linked mannose residue from the non-reducing end of beta-mannosidic oligosaccharides of various complexity and length. Involved in the degradation of polymeric mannan and galactomannan. Releases the terminal mannose residue from mannotriose and is somewaht less active on other mannooligosaccharides. The polypeptide is Beta-mannosidase A (mndA) (Aspergillus aculeatus).